Here is a 561-residue protein sequence, read N- to C-terminus: MKNSFFSSLAKFASLSLAFALPTAEVIPSALEERQSCANTATTRSCWGQYSASTNSYTTVPKTGYWLVVQNTTLSADGVSRPTLNFNGTIPGPQITADWGDDVIVHVTNKLTSNGTSIHWHGIRQLNNAQYDGVPGITQCPIAPGGTLTYKFHADNYGSSWYHSHFILQYGDGLFGPLVINGPATANYDVDLGMLFLNDWNHVPVQSLWDKAKTGAPPTLLTGLMNGTNTYNGAGKKFQTTFTPGLKYRIRVVNTAVDGHFQFSIDGHSFQVIAMDFVPIVPYNATSILVSIAQRYDIIVTANAAVGNYWIRAGWQTACSGNTNAANITGILRYTGSSSTADPTTTSTVTASTSCLDEPLASLVPFVPINPVASSIMKTTLTTGGGQWLFNGSSLLLNWTDPTLLTVLNSGNIWPTEYNVIPIESTTANKGWAVLAISGPNGPNHPIHLHGHDFWTLSQGTGAYTATTALNLVNPPRRDVMTLPTGGHLVIAFQIDNPGSWLMHCHIAWHASEGLALQFVESESSILPTIGTADVSTFQNTCAAWKAWTPTEPFPQDDSGI.

The first 20 residues, 1–20 (MKNSFFSSLAKFASLSLAFA), serve as a signal peptide directing secretion. Plastocyanin-like domains are found at residues 68–185 (VVQN…GPAT) and 191–337 (DLGM…YTGS). N-linked (GlcNAc...) asparagine glycosylation is found at asparagine 71, asparagine 87, and asparagine 114. Cu cation contacts are provided by histidine 119, histidine 121, histidine 163, and histidine 165. Cysteine 140 and cysteine 542 form a disulfide bridge. N-linked (GlcNAc...) asparagine glycosylation is found at asparagine 226, asparagine 284, asparagine 327, asparagine 391, and asparagine 398. The Plastocyanin-like 3 domain occupies 396-525 (LLNWTDPTLL…ALQFVESESS (130 aa)). Histidine 445, histidine 448, histidine 450, histidine 504, cysteine 505, histidine 506, and histidine 510 together coordinate Cu cation.

It belongs to the multicopper oxidase family. It depends on Cu cation as a cofactor.

Its subcellular location is the secreted. The catalysed reaction is 4 hydroquinone + O2 = 4 benzosemiquinone + 2 H2O. Its function is as follows. Lignin degradation and detoxification of lignin-derived products. In Botryotinia fuckeliana (Noble rot fungus), this protein is Laccase-1 (lcc1).